A 329-amino-acid polypeptide reads, in one-letter code: Vomeronasal type-1 receptor 42 (329 aa).

Residues 1-32 (MGDILFSSPQSMFSHTMNKNSILHTHSIIGKT) lie on the Extracellular side of the membrane. Residues 33–53 (FFSEIGIGISGNSFLLLVHIL) form a helical membrane-spanning segment. Over 54–65 (KFIRGHRPRLTD) the chain is Cytoplasmic. A helical transmembrane segment spans residues 66–86 (LPIGLLSLIHLLMLLVAAFIA). Residues 87–109 (TDIFISRRGWDDIICKFLVYLYR) lie on the Extracellular side of the membrane. Cys-101 and Cys-188 are joined by a disulfide. The chain crosses the membrane as a helical span at residues 110-130 (VLRGFSLCTTSMLSILQAIIL). Over 131–150 (SPRSSCLAKFKHISPHHISG) the chain is Cytoplasmic. Residues 151 to 171 (AILFLSVLYMLIGSQLLVSII) traverse the membrane as a helical segment. At 172–209 (ATPNLTMNDFIYVTQSCSILPLSYLMQSIYSTLLAIRE) the chain is on the extracellular side. Residue Asn-175 is glycosylated (N-linked (GlcNAc...) asparagine). Residues 210–230 (FFLISLMVLSNWYMVALLSMH) form a helical membrane-spanning segment. The Cytoplasmic portion of the chain corresponds to 231-254 (RKQTQHLHGTNLSPKKSPEQSATQ). Residues 255–275 (TILMLISFFLLMTIYDTIVSC) form a helical membrane-spanning segment. Over 276 to 285 (SRTMFLNDPT) the chain is Extracellular. A helical membrane pass occupies residues 286 to 306 (SYSIELFIMHIYATVSPFVFM). The Cytoplasmic portion of the chain corresponds to 307 to 329 (STEKHIVNFLRSLGKRVINFNLH).

The protein belongs to the G-protein coupled receptor 1 family.

It localises to the cell membrane. In terms of biological role, putative pheromone receptor implicated in the regulation of social and reproductive behavior. In Mus musculus (Mouse), this protein is Vomeronasal type-1 receptor 42 (Vmn1r42).